The primary structure comprises 258 residues: Acyl-[acyl-carrier-protein]--UDP-N-acetylglucosamine O-acyltransferase (258 aa).

Belongs to the transferase hexapeptide repeat family. LpxA subfamily. Homotrimer.

It localises to the cytoplasm. It catalyses the reaction a (3R)-hydroxyacyl-[ACP] + UDP-N-acetyl-alpha-D-glucosamine = a UDP-3-O-[(3R)-3-hydroxyacyl]-N-acetyl-alpha-D-glucosamine + holo-[ACP]. Its pathway is glycolipid biosynthesis; lipid IV(A) biosynthesis; lipid IV(A) from (3R)-3-hydroxytetradecanoyl-[acyl-carrier-protein] and UDP-N-acetyl-alpha-D-glucosamine: step 1/6. In terms of biological role, involved in the biosynthesis of lipid A, a phosphorylated glycolipid that anchors the lipopolysaccharide to the outer membrane of the cell. The polypeptide is Acyl-[acyl-carrier-protein]--UDP-N-acetylglucosamine O-acyltransferase (Neisseria gonorrhoeae (strain ATCC 700825 / FA 1090)).